The primary structure comprises 162 residues: MAREVISTSILMIATVVAVTAAIMVILPAVKDLAHSYTSVSGNLNEKVETDIEIIFVKVTGDATKVNVYFWVKNTGSTRLDADLVRMSDIFFTSSTTYLHFTGSDTGVTFTIENGDGDEYWERGETLKVAVENIDANQMPQDEYLLTFVLYNGVRANDYFSW.

The first 34 residues, methionine 1–alanine 34, serve as a signal peptide directing secretion.

This is an uncharacterized protein from Archaeoglobus fulgidus (strain ATCC 49558 / DSM 4304 / JCM 9628 / NBRC 100126 / VC-16).